Consider the following 233-residue polypeptide: Small ribosomal subunit protein uS3 (233 aa).

One can recognise a KH type-2 domain in the interval Val-39–Arg-107.

The protein belongs to the universal ribosomal protein uS3 family. Part of the 30S ribosomal subunit. Forms a tight complex with proteins S10 and S14.

Functionally, binds the lower part of the 30S subunit head. Binds mRNA in the 70S ribosome, positioning it for translation. This is Small ribosomal subunit protein uS3 from Baumannia cicadellinicola subsp. Homalodisca coagulata.